A 234-amino-acid polypeptide reads, in one-letter code: Large ribosomal subunit protein uL1 (234 aa).

The protein belongs to the universal ribosomal protein uL1 family. Part of the 50S ribosomal subunit.

Binds directly to 23S rRNA. The L1 stalk is quite mobile in the ribosome, and is involved in E site tRNA release. Functionally, protein L1 is also a translational repressor protein, it controls the translation of the L11 operon by binding to its mRNA. This is Large ribosomal subunit protein uL1 from Yersinia pseudotuberculosis serotype O:1b (strain IP 31758).